Here is a 243-residue protein sequence, read N- to C-terminus: Isoprenyl transferase 2 (243 aa).

Asp-23 is a catalytic residue. A Mg(2+)-binding site is contributed by Asp-23. Substrate contacts are provided by residues 24–27 (GNGR), Trp-28, Arg-36, His-40, and 68–70 (STE). Asn-71 (proton acceptor) is an active-site residue. Substrate-binding positions include Trp-72, Arg-74, Arg-191, and 197-199 (RTS). Mg(2+) is bound at residue Glu-210.

Belongs to the UPP synthase family. As to quaternary structure, homodimer. Mg(2+) is required as a cofactor.

In terms of biological role, catalyzes the condensation of isopentenyl diphosphate (IPP) with allylic pyrophosphates generating different type of terpenoids. In Corynebacterium glutamicum (strain ATCC 13032 / DSM 20300 / JCM 1318 / BCRC 11384 / CCUG 27702 / LMG 3730 / NBRC 12168 / NCIMB 10025 / NRRL B-2784 / 534), this protein is Isoprenyl transferase 2.